Reading from the N-terminus, the 207-residue chain is Protein DMP1 (207 aa).

Residues 1–20 (MSETSLLIPKTNSPASSENM) are disordered. The next 4 helical transmembrane spans lie at 33-53 (LIKLLPTGTLFIYLLLNPVLT), 64-84 (VMSSILVALCSFSCVFSCFTD), 121-141 (IADFVHAGFVLAVFGTLVLLD), and 159-179 (LVMALPPAVGVASATIFALFP).

It belongs to the plant DMP1 protein family. In terms of tissue distribution, expressed in leaves, siliques and roots.

Its subcellular location is the endoplasmic reticulum membrane. It localises to the vacuole membrane. Functionally, involved in membrane remodeling including fission during breakdown of the endoplasmic reticulum (ER) and the tonoplast during leaf senescence and in membrane fusion during vacuole biogenesis in roots. The chain is Protein DMP1 from Arabidopsis thaliana (Mouse-ear cress).